A 277-amino-acid polypeptide reads, in one-letter code: Caspase-3 (277 aa).

M1 carries the post-translational modification N-acetylmethionine. 2 propeptides span residues 1 to 9 (MENSENSVD) and 10 to 28 (AKSIKNSETKIFHGSKSMD). An N6-acetyllysine modification is found at K11. The residue at position 26 (S26) is a Phosphoserine. Active-site residues include H121 and C163. Position 163 is an S-nitrosocysteine; in inhibited form (C163).

This sequence belongs to the peptidase C14A family. As to quaternary structure, heterotetramer that consists of two anti-parallel arranged heterodimers, each one formed by a 17 kDa (p17) and a 12 kDa (p12) subunit. Interacts with BIRC6/bruce. Post-translationally, cleavage by granzyme B, caspase-6, caspase-8 and caspase-10 generates the two active subunits. Additional processing of the propeptides is likely due to the autocatalytic activity of the activated protease. Active heterodimers between the small subunit of caspase-7 protease and the large subunit of caspase-3 also occur and vice versa. S-nitrosylated on its catalytic site cysteine in unstimulated cell lines and denitrosylated upon activation of the Fas apoptotic pathway, associated with an increase in intracellular caspase activity. Fas therefore activates caspase-3 not only by inducing the cleavage of the caspase zymogen to its active subunits, but also by stimulating the denitrosylation of its active site thiol. In terms of processing, ubiquitinated by BIRC6; this activity is inhibited by DIABLO/SMAC.

Its subcellular location is the cytoplasm. It carries out the reaction Strict requirement for an Asp residue at positions P1 and P4. It has a preferred cleavage sequence of Asp-Xaa-Xaa-Asp-|- with a hydrophobic amino-acid residue at P2 and a hydrophilic amino-acid residue at P3, although Val or Ala are also accepted at this position.. Its activity is regulated as follows. Inhibited by BIRC6; following inhibition of BIRC6-caspase binding by DIABLO/SMAC, BIRC6 is subjected to caspase cleavage, leading to an increase in active caspases. In terms of biological role, involved in the activation cascade of caspases responsible for apoptosis execution. At the onset of apoptosis, it proteolytically cleaves poly(ADP-ribose) polymerase PARP1 at a '216-Asp-|-Gly-217' bond. Cleaves and activates sterol regulatory element binding proteins (SREBPs) between the basic helix-loop-helix leucine zipper domain and the membrane attachment domain. Cleaves and activates caspase-6, -7 and -9 (CASP6, CASP7 and CASP9, respectively). Cleaves and inactivates interleukin-18 (IL18). Triggers cell adhesion in sympathetic neurons through RET cleavage. Cleaves IL-1 beta between an Asp and an Ala, releasing the mature cytokine which is involved in a variety of inflammatory processes. Cleaves and inhibits serine/threonine-protein kinase AKT1 in response to oxidative stress. Acts as an inhibitor of type I interferon production during virus-induced apoptosis by mediating cleavage of antiviral proteins CGAS, IRF3 and MAVS, thereby preventing cytokine overproduction. Also involved in pyroptosis by mediating cleavage and activation of gasdermin-E (GSDME). Cleaves XRCC4 and phospholipid scramblase proteins XKR4, XKR8 and XKR9, leading to promote phosphatidylserine exposure on apoptotic cell surface. Cleaves BIRC6 following inhibition of BIRC6-caspase binding by DIABLO/SMAC. This is Caspase-3 (CASP3) from Felis catus (Cat).